A 234-amino-acid chain; its full sequence is Large ribosomal subunit protein uL1 (234 aa).

It belongs to the universal ribosomal protein uL1 family. As to quaternary structure, part of the 50S ribosomal subunit.

Its function is as follows. Binds directly to 23S rRNA. The L1 stalk is quite mobile in the ribosome, and is involved in E site tRNA release. In terms of biological role, protein L1 is also a translational repressor protein, it controls the translation of the L11 operon by binding to its mRNA. The polypeptide is Large ribosomal subunit protein uL1 (Escherichia coli (strain 55989 / EAEC)).